We begin with the raw amino-acid sequence, 238 residues long: Cysteine-rich venom protein pseudecin (238 aa).

An N-terminal signal peptide occupies residues 1–19 (MIAFIVLLSLAAVLQQSSG). A propeptide spanning residues 20 to 28 (TVDFASESS) is cleaved from the precursor. Residues 38-164 (VDKHNALRRS…SSKYLYVCQY (127 aa)) form the SCP domain. Residues Thr-51 and Ser-106 each contribute to the Zn(2+) site. 8 disulfides stabilise this stretch: Cys-75-Cys-153, Cys-92-Cys-165, Cys-148-Cys-162, Cys-184-Cys-191, Cys-187-Cys-196, Cys-200-Cys-233, Cys-209-Cys-227, and Cys-218-Cys-231. Residues 200–233 (CNYNNDFSNCKSLAKKSKCQTEWIKKKCPASCFC) enclose the ShKT domain.

Expressed by the venom gland.

Its subcellular location is the secreted. Functionally, blocks olfactory (CNGA2) and retinal (CNGA1) CNG channel currents. Is really less potent that Pseudechetoxin. Does not affect neither depolarization- nor caffeine-induced contraction of smooth muscle. This is Cysteine-rich venom protein pseudecin from Pseudechis porphyriacus (Red-bellied black snake).